The following is a 138-amino-acid chain: MQQPARTKYRKQQKGRNKGIATRGAKVSFGEYGLKAVGRGRLTARQIEAARRAMTRHIKRGGRIWIRIFPDKPISHKPAEVRMGNGKGNPEYFVAEIQPGKVLYEMDGVDEVLARQAFRLAAAKLPILTTFVVRQVGG.

The tract at residues 1-22 is disordered; sequence MQQPARTKYRKQQKGRNKGIAT. Residues 7-17 show a composition bias toward basic residues; the sequence is TKYRKQQKGRN.

It belongs to the universal ribosomal protein uL16 family. Part of the 50S ribosomal subunit.

Binds 23S rRNA and is also seen to make contacts with the A and possibly P site tRNAs. This is Large ribosomal subunit protein uL16 from Nitrosospira multiformis (strain ATCC 25196 / NCIMB 11849 / C 71).